Here is a 385-residue protein sequence, read N- to C-terminus: Methylthioribose-1-phosphate isomerase (385 aa).

Asp256 functions as the Proton donor in the catalytic mechanism.

Belongs to the eIF-2B alpha/beta/delta subunits family. MtnA subfamily.

Its subcellular location is the cytoplasm. The protein resides in the nucleus. It carries out the reaction 5-(methylsulfanyl)-alpha-D-ribose 1-phosphate = 5-(methylsulfanyl)-D-ribulose 1-phosphate. It functions in the pathway amino-acid biosynthesis; L-methionine biosynthesis via salvage pathway; L-methionine from S-methyl-5-thio-alpha-D-ribose 1-phosphate: step 1/6. In terms of biological role, catalyzes the interconversion of methylthioribose-1-phosphate (MTR-1-P) into methylthioribulose-1-phosphate (MTRu-1-P). The chain is Methylthioribose-1-phosphate isomerase from Arthroderma otae (strain ATCC MYA-4605 / CBS 113480) (Microsporum canis).